A 163-amino-acid chain; its full sequence is uncharacterized protein (163 aa).

This is an uncharacterized protein from Shigella flexneri.